A 43-amino-acid polypeptide reads, in one-letter code: DRDSCVDKSRCAKYGYYGQCEVCCKKAGHRGGTCDFFKCKCKV.

Cystine bridges form between Cys5–Cys23, Cys11–Cys34, Cys20–Cys39, and Cys24–Cys41.

The protein belongs to the ergtoxin family. Gamma-KTx 3 subfamily. As to expression, expressed by the venom gland.

The protein resides in the secreted. In terms of biological role, blocks Kv11/ERG potassium channels. The chain is Potassium channel toxin gamma-KTx 3.3 from Centruroides sculpturatus (Arizona bark scorpion).